Here is a 550-residue protein sequence, read N- to C-terminus: Glucose-6-phosphate isomerase 1 (550 aa).

Glu-353 serves as the catalytic Proton donor. Residues His-384 and Lys-512 contribute to the active site.

The protein belongs to the GPI family.

The protein localises to the cytoplasm. The catalysed reaction is alpha-D-glucose 6-phosphate = beta-D-fructose 6-phosphate. It participates in carbohydrate biosynthesis; gluconeogenesis. The protein operates within carbohydrate degradation; glycolysis; D-glyceraldehyde 3-phosphate and glycerone phosphate from D-glucose: step 2/4. In terms of biological role, catalyzes the reversible isomerization of glucose-6-phosphate to fructose-6-phosphate. The protein is Glucose-6-phosphate isomerase 1 of Thiobacillus denitrificans (strain ATCC 25259 / T1).